Here is a 420-residue protein sequence, read N- to C-terminus: 3-isopropylmalate dehydratase large subunit (420 aa).

3 residues coordinate [4Fe-4S] cluster: C300, C360, and C363.

It belongs to the aconitase/IPM isomerase family. LeuC type 2 subfamily. As to quaternary structure, heterodimer of LeuC and LeuD. [4Fe-4S] cluster serves as cofactor.

It catalyses the reaction (2R,3S)-3-isopropylmalate = (2S)-2-isopropylmalate. Its pathway is amino-acid biosynthesis; L-leucine biosynthesis; L-leucine from 3-methyl-2-oxobutanoate: step 2/4. Its function is as follows. Catalyzes the isomerization between 2-isopropylmalate and 3-isopropylmalate, via the formation of 2-isopropylmaleate. The protein is 3-isopropylmalate dehydratase large subunit of Clostridium kluyveri (strain ATCC 8527 / DSM 555 / NBRC 12016 / NCIMB 10680 / K1).